The sequence spans 524 residues: Glucose-6-phosphate isomerase (524 aa).

Glu-346 (proton donor) is an active-site residue. Active-site residues include His-377 and Lys-492.

It belongs to the GPI family.

Its subcellular location is the cytoplasm. The enzyme catalyses alpha-D-glucose 6-phosphate = beta-D-fructose 6-phosphate. Its pathway is carbohydrate biosynthesis; gluconeogenesis. It functions in the pathway carbohydrate degradation; glycolysis; D-glyceraldehyde 3-phosphate and glycerone phosphate from D-glucose: step 2/4. Functionally, catalyzes the reversible isomerization of glucose-6-phosphate to fructose-6-phosphate. The chain is Glucose-6-phosphate isomerase from Chlamydia trachomatis serovar A (strain ATCC VR-571B / DSM 19440 / HAR-13).